The chain runs to 482 residues: Transcription initiation factor IIE subunit alpha (482 aa).

The HTH TFE/IIEalpha-type domain occupies 9–99 (VKNLLKFVVR…KYPHAIDAIK (91 aa)). The C4-type zinc finger occupies 124–152 (CPICLTKYTQLEAVQLLNFDRTEFLCSLC). Residues 274-286 (RELQERQAEEKRK) are compositionally biased toward basic and acidic residues. 2 disordered regions span residues 274–295 (RELQ…EWHK) and 321–482 (AMDS…FEDV). A compositionally biased stretch (polar residues) spans 321 to 345 (AMDSINPDNEPAQETSYQNNRTLTE). A compositionally biased stretch (acidic residues) spans 374–401 (EEEEEEEEEEDEEEEEEEEMEDVMDDND). Positions 419 to 432 (TAGTAKTESNTSND) are enriched in polar residues. Over residues 433 to 444 (VKQESINDKTED) the composition is skewed to basic and acidic residues. The segment covering 464–482 (GDDDDDDDDDEMDIEFEDV) has biased composition (acidic residues).

The protein belongs to the TFIIE alpha subunit family. In terms of assembly, TFIIE is a tetramer of two alpha (TFA1) and two beta (TFA2) subunits.

It is found in the nucleus. In terms of biological role, recruits TFIIH to the initiation complex and stimulates the RNA polymerase II C-terminal domain kinase and DNA-dependent ATPase activities of TFIIH. Both TFIIH and TFIIE are required for promoter clearance by RNA polymerase. This Saccharomyces cerevisiae (strain ATCC 204508 / S288c) (Baker's yeast) protein is Transcription initiation factor IIE subunit alpha (TFA1).